The sequence spans 962 residues: Rho GTPase-activating protein syd-1 (962 aa).

Disordered regions lie at residues 231–367 (GKKS…MRSD), 397–419 (PRTL…RIMT), and 437–471 (CGEE…NGSP). 4 stretches are compositionally biased toward polar residues: residues 243–261 (NATT…SSPR), 323–345 (SFNS…SSTA), 401–412 (RQPNDSNKSNSL), and 453–471 (PPFS…NGSP). One can recognise a C2 domain in the interval 572-696 (RAAGPGINVD…NDDRVFALNL (125 aa)). The Rho-GAP domain occupies 729–923 (VPLGRLVQRE…LDMNQASSSL (195 aa)). Residues 934–947 (VNSESGSDSPATSG) are compositionally biased toward polar residues. Residues 934 to 962 (VNSESGSDSPATSGQKGGGGVSYVSESQC) form a disordered region.

Its subcellular location is the synapse. In terms of biological role, probable GTPase activator for the Rho-type GTPases by converting them to an inactive GDP-bound state. Regulates the localization and assembly of presynaptic components during presynaptic development and is required for specifying the identity of axons during initial polarity acquisition. In these roles it is thought to act cell autonomously downstream of syg-1 and syg-2 and upstream of syd-2, possibly as a positive regulator of the latter. Required for the control of movement, egg-laying and the correct localization of elks-1. The chain is Rho GTPase-activating protein syd-1 from Caenorhabditis briggsae.